A 471-amino-acid polypeptide reads, in one-letter code: N-succinylglutamate 5-semialdehyde dehydrogenase (471 aa).

Residue 207-212 coordinates NAD(+); that stretch reads GSAHAG. Catalysis depends on residues E230 and C264.

The protein belongs to the aldehyde dehydrogenase family. AstD subfamily.

It carries out the reaction N-succinyl-L-glutamate 5-semialdehyde + NAD(+) + H2O = N-succinyl-L-glutamate + NADH + 2 H(+). It functions in the pathway amino-acid degradation; L-arginine degradation via AST pathway; L-glutamate and succinate from L-arginine: step 4/5. Catalyzes the NAD-dependent reduction of succinylglutamate semialdehyde into succinylglutamate. The chain is N-succinylglutamate 5-semialdehyde dehydrogenase from Novosphingobium aromaticivorans (strain ATCC 700278 / DSM 12444 / CCUG 56034 / CIP 105152 / NBRC 16084 / F199).